The primary structure comprises 273 residues: Large ribosomal subunit protein uL2 (273 aa).

The interval tryptophan 213–asparagine 261 is disordered.

Belongs to the universal ribosomal protein uL2 family. In terms of assembly, part of the 50S ribosomal subunit. Forms a bridge to the 30S subunit in the 70S ribosome.

In terms of biological role, one of the primary rRNA binding proteins. Required for association of the 30S and 50S subunits to form the 70S ribosome, for tRNA binding and peptide bond formation. It has been suggested to have peptidyltransferase activity; this is somewhat controversial. Makes several contacts with the 16S rRNA in the 70S ribosome. The chain is Large ribosomal subunit protein uL2 from Syntrophotalea carbinolica (strain DSM 2380 / NBRC 103641 / GraBd1) (Pelobacter carbinolicus).